The chain runs to 522 residues: Glutamate--cysteine ligase (522 aa).

The protein belongs to the glutamate--cysteine ligase type 1 family. Type 1 subfamily.

It carries out the reaction L-cysteine + L-glutamate + ATP = gamma-L-glutamyl-L-cysteine + ADP + phosphate + H(+). It participates in sulfur metabolism; glutathione biosynthesis; glutathione from L-cysteine and L-glutamate: step 1/2. The protein is Glutamate--cysteine ligase of Vibrio parahaemolyticus serotype O3:K6 (strain RIMD 2210633).